Reading from the N-terminus, the 646-residue chain is Acetyl-coenzyme A synthetase (646 aa).

Residues 190-193 (RAGN) and threonine 309 contribute to the CoA site. ATP is bound by residues 385–387 (GEP), 409–414 (DTWWQT), aspartate 498, and arginine 513. Serine 521 is a CoA binding site. Arginine 524 is an ATP binding site. Residues valine 535, histidine 537, and valine 540 each coordinate Mg(2+). Arginine 582 provides a ligand contact to CoA. Lysine 607 carries the N6-acetyllysine modification.

This sequence belongs to the ATP-dependent AMP-binding enzyme family. Mg(2+) serves as cofactor. Acetylated. Deacetylation by the SIR2-homolog deacetylase activates the enzyme.

It carries out the reaction acetate + ATP + CoA = acetyl-CoA + AMP + diphosphate. In terms of biological role, catalyzes the conversion of acetate into acetyl-CoA (AcCoA), an essential intermediate at the junction of anabolic and catabolic pathways. AcsA undergoes a two-step reaction. In the first half reaction, AcsA combines acetate with ATP to form acetyl-adenylate (AcAMP) intermediate. In the second half reaction, it can then transfer the acetyl group from AcAMP to the sulfhydryl group of CoA, forming the product AcCoA. In Pseudoalteromonas translucida (strain TAC 125), this protein is Acetyl-coenzyme A synthetase.